The following is a 61-amino-acid chain: Large ribosomal subunit protein bL32 (61 aa).

It belongs to the bacterial ribosomal protein bL32 family.

The protein is Large ribosomal subunit protein bL32 of Acidithiobacillus ferrooxidans (strain ATCC 23270 / DSM 14882 / CIP 104768 / NCIMB 8455) (Ferrobacillus ferrooxidans (strain ATCC 23270)).